The sequence spans 132 residues: Histone H2A.2 (132 aa).

Position 2 is an N-acetylserine (S2). 2 positions are modified to N6-acetyllysine: K5 and K8. N6-succinyllysine occurs at positions 14 and 22. Q106 carries the N5-methylglutamine modification. An N6-malonyllysine modification is found at K120. Residue K127 forms a Glycyl lysine isopeptide (Lys-Gly) (interchain with G-Cter in SUMO) linkage. The residue at position 129 (S129) is a Phosphoserine. Positions 129–130 match the [ST]-Q motif motif; sequence SQ.

This sequence belongs to the histone H2A family. The nucleosome is a histone octamer containing two molecules each of H2A, H2B, H3 and H4 assembled in one H3-H4 heterotetramer and two H2A-H2B heterodimers. The octamer wraps approximately 147 bp of DNA. Interacts with NAP1. Phosphorylated to form H2AS128ph (gamma-H2A) in response to DNA double-strand breaks (DSBs) generated by exogenous genotoxic agents and by stalled replication forks. Phosphorylation is dependent on the DNA damage checkpoint kinases MEC1/ATR and TEL1/ATM, spreads on either side of a detected DSB site and may mark the surrounding chromatin for recruitment of proteins required for DNA damage signaling and repair. Gamma-H2A interacts with ARP4, a shared component of the NuA4 histone acetyltransferase complex and the INO80 and SWR1 chromatin remodeling complexes, and serves to recruit first NuA4, mediating histone H4 acetylation, and subsequently the INO80/SWR1 complexes, facilitating DNA resection, to DSB sites. Gamma-H2A is required for sequestering cohesin around the break site, which is important for efficient post-replicative double-strand break repair by homologous recombination, holding the damaged chromatid close to its undamaged sister template. Gamma-H2A is removed from the DNA prior to the strand invasion-primer extension step of the repair process and subsequently dephosphorylated by PPH3, a component of the histone H2A phosphatase complex (HTP-C). Dephosphorylation is necessary for efficient recovery from the DNA damage checkpoint. Post-translationally, N-acetylated by NAT4. In terms of processing, acetylated by ESA1, a component of the NuA4 histone acetyltransferase (HAT) complex, to form H2AK4ac and H2AK7ac. Glutamine methylation at Gln-106 (H2AQ105me) by NOP1 is specifically dedicated to polymerase I. It is present at 35S ribosomal DNA locus and impairs binding of the FACT complex. Post-translationally, sumoylated to from H2AK126su. May lead to transcriptional repression.

The protein resides in the nucleus. It is found in the chromosome. Core component of nucleosome which plays a central role in DNA double strand break (DSB) repair. Nucleosomes wrap and compact DNA into chromatin, limiting DNA accessibility to the cellular machineries which require DNA as a template. Histones thereby play a central role in transcription regulation, DNA repair, DNA replication and chromosomal stability. DNA accessibility is regulated via a complex set of post-translational modifications of histones, also called histone code, and nucleosome remodeling. This is Histone H2A.2 (HTA2) from Saccharomyces cerevisiae (strain ATCC 204508 / S288c) (Baker's yeast).